The chain runs to 640 residues: Threonine--tRNA ligase (640 aa).

Residues 1-61 (MPIITLPNGD…TEDATLQIIT (61 aa)) enclose the TGS domain. Residues 242 to 533 (DHRKIGKALD…LIEHYAGFMP (292 aa)) are catalytic. Zn(2+)-binding residues include Cys333, His384, and His510.

This sequence belongs to the class-II aminoacyl-tRNA synthetase family. Homodimer. Zn(2+) serves as cofactor.

It is found in the cytoplasm. The catalysed reaction is tRNA(Thr) + L-threonine + ATP = L-threonyl-tRNA(Thr) + AMP + diphosphate + H(+). Functionally, catalyzes the attachment of threonine to tRNA(Thr) in a two-step reaction: L-threonine is first activated by ATP to form Thr-AMP and then transferred to the acceptor end of tRNA(Thr). Also edits incorrectly charged L-seryl-tRNA(Thr). The polypeptide is Threonine--tRNA ligase (Acinetobacter baylyi (strain ATCC 33305 / BD413 / ADP1)).